Here is a 499-residue protein sequence, read N- to C-terminus: Serine/threonine-protein phosphatase 5 (499 aa).

The segment at 1–23 (MAMAEGERTECAEPPRDEPPADG) is disordered. Alanine 2 bears the N-acetylalanine mark. TPR repeat units follow at residues 28–61 (AEELKTQANDYFKAKDYENAIKFYSQAIELNPSN), 62–95 (AIYYGNRSLAYLRTECYGYALGDATRAIELDKKY), and 96–129 (IKGYYRRAASNMALGKFRAALRDYETVVKVKPHD). Positions 184-499 (GKVTISFMKE…ANTLLQLGMM (316 aa)) are catalytic. Mn(2+) is bound by residues aspartate 242, histidine 244, and aspartate 271. Histidine 244 provides a ligand contact to substrate. Substrate contacts are provided by residues arginine 275 and 303 to 304 (NH). Position 303 (asparagine 303) interacts with Mn(2+). Histidine 304 (proton donor/acceptor) is an active-site residue. Position 352 (histidine 352) interacts with Mn(2+). Arginine 400 and histidine 427 together coordinate substrate. Histidine 427 provides a ligand contact to Mn(2+). Residues 495-499 (QLGMM) are required for autoinhibition.

The protein belongs to the PPP phosphatase family. PP-5 (PP-T) subfamily. Probably forms a complex composed of chaperones HSP90 and HSP70, co-chaperones STIP1/HOP, CDC37, PPP5C, PTGES3/p23, TSC1 and client protein TSC2. Probably forms a complex composed of chaperones HSP90 and HSP70, co-chaperones CDC37, PPP5C, TSC1 and client protein TSC2, CDK4, AKT, RAF1 and NR3C1; this complex does not contain co-chaperones STIP1/HOP and PTGES3/p23. Part of a complex with HSP90/HSP90AA1 and steroid receptors. Interacts (via TPR repeats) with HSP90AA1 (via TPR repeat-binding motif) or HSPA1A/HSPA1B; the interaction is direct and activates the phosphatase activity. Dissociates from HSPA1A/HSPA1B and HSP90AA1 in response to arachidonic acid. Interacts with CPNE1 (via VWFA domain). Interacts with CDC16, CDC27. Interacts with KLHDC10 (via the 6 Kelch repeats); inhibits the phosphatase activity on MAP3K5. Interacts with ATM and ATR; both interactions are induced by DNA damage and enhance ATM and ATR kinase activity. Interacts with RAD17; reduced by DNA damage. Interacts with nuclear receptors such as NR3C1/GCR and PPARG (activated by agonist); regulates their transactivation activities. Interacts (via TPR repeats) with S100 proteins S100A1, S100A2, S100A6, S100B and S100P; the interactions are calcium-dependent, strongly activate PPP5C phosphatase activity and compete with HSP90AA1 and MAP3K5 interactions. Interacts with SMAD2 and SMAD3 but not with SMAD1; decreases SMAD3 phosphorylation and protein levels. Interacts (via TPR repeats) with CRY1 and CRY2; the interaction with CRY2 down-regulates the phosphatase activity on CSNK1E. Interacts (via TPR repeats) with the active form of RAC1, GNA12 or GNA13; these interactions activate the phosphatase activity and translocate PPP5C to the cell membrane. Interacts with FLCN. The cofactor is Mg(2+). Mn(2+) serves as cofactor. Activated by at least two different proteolytic cleavages producing a 56 kDa and a 50 kDa form. In terms of tissue distribution, ubiquitous.

Its subcellular location is the nucleus. The protein resides in the cytoplasm. The protein localises to the cell membrane. The enzyme catalyses O-phospho-L-seryl-[protein] + H2O = L-seryl-[protein] + phosphate. It carries out the reaction O-phospho-L-threonyl-[protein] + H2O = L-threonyl-[protein] + phosphate. Autoinhibited. In the autoinhibited state, the TPR domain interacts with the catalytic region and prevents substrate access to the catalytic pocket. Allosterically activated by various polyunsaturated fatty acids, free long-chain fatty-acids and long-chain fatty acyl-CoA esters, arachidonic acid being the most effective activator. HSP90A and probably RAC1, GNA12 and GNA13 can also release the autoinhibition by the TPR repeat. Activation by RAC1, GNA12 and GNA13 is synergistic with the one produced by fatty acids binding. Inhibited by okadaic acid. Its function is as follows. Serine/threonine-protein phosphatase that dephosphorylates a myriad of proteins involved in different signaling pathways including the kinases CSNK1E, ASK1/MAP3K5, PRKDC and RAF1, the nuclear receptors NR3C1, PPARG, ESR1 and ESR2, SMAD proteins and TAU/MAPT. Implicated in wide ranging cellular processes, including apoptosis, differentiation, DNA damage response, cell survival, regulation of ion channels or circadian rhythms, in response to steroid and thyroid hormones, calcium, fatty acids, TGF-beta as well as oxidative and genotoxic stresses. Participates in the control of DNA damage response mechanisms such as checkpoint activation and DNA damage repair through, for instance, the regulation ATM/ATR-signaling and dephosphorylation of PRKDC and TP53BP1. Inhibits ASK1/MAP3K5-mediated apoptosis induced by oxidative stress. Plays a positive role in adipogenesis, mainly through the dephosphorylation and activation of PPARG transactivation function. Also dephosphorylates and inhibits the anti-adipogenic effect of NR3C1. Regulates the circadian rhythms, through the dephosphorylation and activation of CSNK1E. May modulate TGF-beta signaling pathway by the regulation of SMAD3 phosphorylation and protein expression levels. Dephosphorylates and may play a role in the regulation of TAU/MAPT. Through their dephosphorylation, may play a role in the regulation of ions channels such as KCNH2. Dephosphorylate FNIP1, disrupting interaction with HSP90AA1/Hsp90. This chain is Serine/threonine-protein phosphatase 5 (PPP5C), found in Homo sapiens (Human).